A 614-amino-acid polypeptide reads, in one-letter code: Acid phosphatase (614 aa).

The signal sequence occupies residues 1-22; it reads MKGTAASALLVALSATAAQARP. Positions 80–176 constitute a Fibronectin type-III domain; that stretch reads IPKGMHIHYQ…EVLSFKTSRP (97 aa). 13 N-linked (GlcNAc...) asparagine glycosylation sites follow: N110, N161, N242, N295, N333, N340, N352, N408, N429, N512, N523, N559, and N578. Residues 606 to 614 constitute a propeptide that is removed on maturation; the sequence is VAGGKKLHS.

In terms of assembly, monomer. Cu cation is required as a cofactor. Glycosylated; probably with N-linked high-mannose oligosaccharides.

Its subcellular location is the secreted. It catalyses the reaction a phosphate monoester + H2O = an alcohol + phosphate. With respect to regulation, competitively inhibited by phosphomycin and inorganic orthophosphate. The chain is Acid phosphatase (aphA) from Aspergillus ficuum.